The chain runs to 646 residues: Phosphomethylpyrimidine synthase (646 aa).

Polar residues predominate over residues 1 to 13; the sequence is MNIRSNPDTTRPA. The interval 1-21 is disordered; sequence MNIRSNPDTTRPAVTTGGLPS. Residues Asn221, Met250, Tyr279, His315, 335–337, 376–379, and Glu415 contribute to the substrate site; these read SRG and DGLR. A Zn(2+)-binding site is contributed by His419. Residue Tyr442 coordinates substrate. Residue His483 coordinates Zn(2+). 3 residues coordinate [4Fe-4S] cluster: Cys563, Cys566, and Cys571.

It belongs to the ThiC family. Homodimer. It depends on [4Fe-4S] cluster as a cofactor.

It carries out the reaction 5-amino-1-(5-phospho-beta-D-ribosyl)imidazole + S-adenosyl-L-methionine = 4-amino-2-methyl-5-(phosphooxymethyl)pyrimidine + CO + 5'-deoxyadenosine + formate + L-methionine + 3 H(+). The protein operates within cofactor biosynthesis; thiamine diphosphate biosynthesis. Catalyzes the synthesis of the hydroxymethylpyrimidine phosphate (HMP-P) moiety of thiamine from aminoimidazole ribotide (AIR) in a radical S-adenosyl-L-methionine (SAM)-dependent reaction. The sequence is that of Phosphomethylpyrimidine synthase from Rhodopseudomonas palustris (strain HaA2).